The chain runs to 556 residues: Formate--tetrahydrofolate ligase 1 (556 aa).

65–72 serves as a coordination point for ATP; the sequence is TPAGEGKS.

It belongs to the formate--tetrahydrofolate ligase family.

The catalysed reaction is (6S)-5,6,7,8-tetrahydrofolate + formate + ATP = (6R)-10-formyltetrahydrofolate + ADP + phosphate. It functions in the pathway one-carbon metabolism; tetrahydrofolate interconversion. This Streptococcus pyogenes serotype M2 (strain MGAS10270) protein is Formate--tetrahydrofolate ligase 1.